The chain runs to 42 residues: Gastric inhibitory polypeptide (42 aa).

It belongs to the glucagon family.

It is found in the secreted. Functionally, potent stimulator of insulin secretion and relatively poor inhibitor of gastric acid secretion. The chain is Gastric inhibitory polypeptide (GIP) from Sus scrofa (Pig).